Consider the following 2193-residue polypeptide: Genome polyprotein (2193 aa).

Residues 1 to 22 (MGSQVSTQRSGSHENSNSATEG) form a disordered region. Residue glycine 2 is the site of N-myristoyl glycine; by host attachment. The Cytoplasmic portion of the chain corresponds to 2 to 1503 (GSQVSTQRSG…HLNRAVLVMQ (1502 aa)). Amphipathic alpha-helix stretches follow at residues 566 to 588 (GDRV…LTPA) and 568 to 588 (RVAD…LTPA). Active-site for protease 2A activity residues include histidine 883 and aspartate 901. Cysteine 918 and cysteine 920 together coordinate Zn(2+). The active-site For protease 2A activity is the cysteine 972. Residues cysteine 978 and histidine 980 each contribute to the Zn(2+) site. A membrane-binding region spans residues 1112 to 1184 (SASWLKKFND…EQSAASQEDL (73 aa)). An oligomerization region spans residues 1112-1250 (SASWLKKFND…SPGTGKSLAT (139 aa)). Positions 1133-1137 (FNKIS) are RNA-binding. In terms of domain architecture, SF3 helicase spans 1216–1374 (EKRMNNYMQF…YKTDLGRLDA (159 aa)). Residue 1240–1247 (GSPGTGKS) coordinates ATP. Positions 1381, 1392, and 1397 each coordinate Zn(2+). The C4-type; degenerate zinc-finger motif lies at 1381 to 1397 (CTENNTANFKRCSPLVC). Positions 1424 to 1431 (EYNNRSAI) are RNA-binding. The interval 1435-1440 (IEALFQ) is oligomerization. Residues 1504-1519 (SIATVVAVVSLVYVIY) lie within the membrane without spanning it. Residues 1520-2193 (KLFAGFQGAY…NLRRNWLELF (674 aa)) lie on the Cytoplasmic side of the membrane. Tyrosine 1529 is modified (O-(5'-phospho-RNA)-tyrosine). One can recognise a Peptidase C3 domain in the interval 1549–1727 (GPSLDFALSL…FCAGLKRSYF (179 aa)). Active-site for protease 3C activity residues include histidine 1588, glutamate 1619, and cysteine 1695. The region spanning 1958-2073 (GSLFAFDYSG…ASYPFPIDCL (116 aa)) is the RdRp catalytic domain. Residues aspartate 1964 and aspartate 2060 each coordinate Mg(2+).

It belongs to the picornaviruses polyprotein family. Interacts with capsid protein VP1 and capsid protein VP3 to form heterotrimeric protomers. In terms of assembly, interacts with capsid protein VP0, and capsid protein VP3 to form heterotrimeric protomers. Five protomers subsequently associate to form pentamers which serve as building blocks for the capsid. Interacts with capsid protein VP2, capsid protein VP3 and capsid protein VP4 following cleavage of capsid protein VP0. Interacts with host SCARB2. Interacts with host ARF6; this interaction mediates viral endocytosis. As to quaternary structure, interacts with capsid protein VP1 and capsid protein VP3 in the mature capsid. Interacts with host SCARB2. Interacts with capsid protein VP0 and capsid protein VP1 to form heterotrimeric protomers. Five protomers subsequently associate to form pentamers which serve as building blocks for the capsid. Interacts with capsid protein VP4 in the mature capsid. Interacts with protein 2C; this interaction may be important for virion morphogenesis. In terms of assembly, interacts with capsid protein VP1 and capsid protein VP3. As to quaternary structure, homodimer. Interacts with host SPOP; this interaction promotes protease 2A ubiquitination and subsequent degradation. Interacts with host BAX; this interaction activates the mitochondrial apoptotic pathway. Interacts with host ILF2. In terms of assembly, homohexamer; forms a hexameric ring structure with 6-fold symmetry characteristic of AAA+ ATPases. Interacts (via N-terminus) with host RTN3 (via reticulon domain); this interaction is important for viral replication. Interacts with capsid protein VP3; this interaction may be important for virion morphogenesis. As to quaternary structure, interacts with protein 3CD. Homodimer. Interacts with host GBF1. Interacts (via GOLD domain) with host ACBD3 (via GOLD domain); this interaction allows the formation of a viral protein 3A/ACBD3 heterotetramer with a 2:2 stoichiometry, which will stimulate the recruitment of host PI4KB in order to synthesize PI4P at the viral RNA replication sites. In terms of assembly, interacts with RNA-directed RNA polymerase. As to quaternary structure, interacts with host IFIH1/MDA5; this interaction inhibits host IFIH1. Interacts with host RIGI. Interacts with protein 3AB and with RNA-directed RNA polymerase. Interacts with host PPP1R15A. In terms of assembly, interacts with Viral protein genome-linked and with protein 3CD. Interacts with host NLRP3. Mg(2+) serves as cofactor. In terms of processing, specific enzymatic cleavages in vivo by the viral proteases yield processing intermediates and the mature proteins. Myristoylation is required for the formation of pentamers during virus assembly. Further assembly of 12 pentamers and a molecule of genomic RNA generates the provirion. Post-translationally, during virion maturation, immature virions are rendered infectious following cleavage of VP0 into VP4 and VP2. This maturation seems to be an autocatalytic event triggered by the presence of RNA in the capsid and it is followed by a conformational change infectious virion. In terms of processing, myristoylation is required during RNA encapsidation and formation of the mature virus particle. VPg is uridylylated by the polymerase into VPg-pUpU. This acts as a nucleotide-peptide primer for the genomic RNA replication.

It is found in the virion. The protein localises to the host cytoplasm. It localises to the host cytoplasmic vesicle membrane. The protein resides in the host nucleus. The catalysed reaction is a ribonucleoside 5'-triphosphate + H2O = a ribonucleoside 5'-diphosphate + phosphate + H(+). It catalyses the reaction Selective cleavage of Tyr-|-Gly bond in the picornavirus polyprotein.. It carries out the reaction RNA(n) + a ribonucleoside 5'-triphosphate = RNA(n+1) + diphosphate. The enzyme catalyses Selective cleavage of Gln-|-Gly bond in the poliovirus polyprotein. In other picornavirus reactions Glu may be substituted for Gln, and Ser or Thr for Gly.. Replication or transcription is subject to high level of random mutations by the nucleotide analog ribavirin. Functionally, forms an icosahedral capsid of pseudo T=3 symmetry with capsid proteins VP2 and VP3. The capsid is 300 Angstroms in diameter, composed of 60 copies of each capsid protein and enclosing the viral positive strand RNA genome. Capsid protein VP1 mainly forms the vertices of the capsid. Capsid protein VP1, together with VP2, interacts with host cell receptor SCARB2 to provide virion attachment to target host cells. This attachment induces virion internalization predominantly through clathrin-dependent endocytosis. After binding to its receptor, the capsid undergoes conformational changes. Capsid protein VP1 N-terminus (that contains an amphipathic alpha-helix) and capsid protein VP4 are externalized. Together, they shape a pore in the host membrane through which viral genome is translocated to host cell cytoplasm. Forms an icosahedral capsid of pseudo T=3 symmetry with capsid proteins VP2 and VP3. The capsid is 300 Angstroms in diameter, composed of 60 copies of each capsid protein and enclosing the viral positive strand RNA genome. Capsid protein VP2, together with VP1, interacts with host cell receptor SCARB2 to provide virion attachment to target host cells. Its function is as follows. Forms an icosahedral capsid of pseudo T=3 symmetry with capsid proteins VP2 and VP3. The capsid is 300 Angstroms in diameter, composed of 60 copies of each capsid protein and enclosing the viral positive strand RNA genome. In terms of biological role, lies on the inner surface of the capsid shell. After binding to the host receptor, the capsid undergoes conformational changes. Capsid protein VP4 is released, Capsid protein VP1 N-terminus is externalized, and together, they shape a pore in the host membrane through which the viral genome is translocated into the host cell cytoplasm. Functionally, component of immature procapsids, which is cleaved into capsid proteins VP4 and VP2 after maturation. Allows the capsid to remain inactive before the maturation step. Cysteine protease that cleaves viral polyprotein and specific host proteins. It is responsible for the autocatalytic cleavage between the P1 and P2 regions, which is the first cleavage occurring in the polyprotein. Also cleaves the host translation initiation factor EIF4G1, in order to shut down the capped cellular mRNA translation. Inhibits the host nucleus-cytoplasm protein and RNA trafficking by cleaving host members of the nuclear pores. Counteracts stress granule formation probably by antagonizing its assembly or promoting its dissassembly. Cleaves and inhibits host IFIH1/MDA5, thereby inhibiting the type-I IFN production and the establishment of the antiviral state. Cleaves and inhibits host MAVS, thereby inhibiting the type-I IFN production and the establishment of the antiviral state. Its function is as follows. Plays an essential role in the virus replication cycle by acting as a viroporin. Creates a pore in the host endoplasmic reticulum and as a consequence releases Ca2+ in the cytoplasm of infected cell. In turn, high levels of cytoplasmic calcium may trigger membrane trafficking and transport of viral ER-associated proteins to viroplasms, sites of viral genome replication. Also activates the mitochondrial apoptotic pathway by activating host BAX. In terms of biological role, induces and associates with structural rearrangements of intracellular membranes. Displays RNA-binding, nucleotide binding and NTPase activities. May play a role in virion morphogenesis and viral RNA encapsidation by interacting with the capsid protein VP3. Functionally, localizes the viral replication complex to the surface of membranous vesicles. Together with protein 3CD binds the Cis-Active RNA Element (CRE) which is involved in RNA synthesis initiation. Acts as a cofactor to stimulate the activity of 3D polymerase, maybe through a nucleid acid chaperone activity. Localizes the viral replication complex to the surface of membranous vesicles. It inhibits host cell endoplasmic reticulum-to-Golgi apparatus transport and causes the disassembly of the Golgi complex, possibly through GBF1 interaction. This would result in depletion of MHC, trail receptors and IFN receptors at the host cell surface. Plays an essential role in viral RNA replication by recruiting ACBD3 and PI4KB at the viral replication sites, thereby allowing the formation of the rearranged membranous structures where viral replication takes place. Its function is as follows. Acts as a primer for viral RNA replication and remains covalently bound to viral genomic RNA. VPg is uridylylated prior to priming replication into VPg-pUpU. The oriI viral genomic sequence may act as a template for this. The VPg-pUpU is then used as primer on the genomic RNA poly(A) by the RNA-dependent RNA polymerase to replicate the viral genome. During genome replication, the VPg-RNA linkage is removed by the host TDP2, thereby accelerating replication. During the late stage of the replication cycle, host TDP2 is excluded from sites of viral RNA synthesis and encapsidation, allowing for the generation of progeny virions. In terms of biological role, involved in the viral replication complex and viral polypeptide maturation. It exhibits protease activity with a specificity and catalytic efficiency that is different from protease 3C. Protein 3CD lacks polymerase activity. Protein 3CD binds to the 5'UTR of the viral genome. Regulates host protein expression by interacting with host PPP1R15A to support viral replication. Functionally, major viral protease that mediates proteolytic processing of the polyprotein. Cleaves host EIF5B, contributing to host translation shutoff. Also cleaves host PABPC1, contributing to host translation shutoff. Disassembles host cytoplasmic stress granules by cleaving host G3BP1, although this effect is less prononced than the inhibition induced by protease 2A. Cleaves host RIGI and thus contributes to the inhibition of type I interferon production. Cleaves host IRF7 and thus contributes to the inhibition of type I interferon production. Cleaves host HNRNPA1 thereby increasing the translation of apoptosis protease activating factor APAF1, leading to apoptosis of the host cell. Cleaves host NLRP1, triggers host N-glycine-mediated degradation of the autoinhibitory NLRP1 N-terminal fragment. Cleaves and inactivates host GSDMD, preventing GSDMD-mediated pyroptosis. Also promotes apoptosis in infected cell through cleaving of host PINX1, a telomere binding protein in order to facilitate viral release. Impairs host PML-NBs production via PML cleavage and counter its antiviral activities. Replicates the viral genomic RNA on the surface of intracellular membranes. May form linear arrays of subunits that propagate along a strong head-to-tail interaction called interface-I. Covalently attaches UMP to a tyrosine of VPg, which is used to prime RNA synthesis. The positive stranded RNA genome is first replicated at virus induced membranous vesicles, creating a dsRNA genomic replication form. This dsRNA is then used as template to synthesize positive stranded RNA genomes. ss(+)RNA genomes are either translated, replicated or encapsidated. Facilitates the assembly of NLRP3 inflammasome complex and stimulates the cleavage of host pro-CASP1 and the secretion of IL-1beta. This Human enterovirus 71 (strain USA/BrCr/1970) (EV71) protein is Genome polyprotein.